The primary structure comprises 454 residues: tRNA modification GTPase MnmE (454 aa).

Residues Arg-23, Glu-80, and Lys-120 each coordinate (6S)-5-formyl-5,6,7,8-tetrahydrofolate. In terms of domain architecture, TrmE-type G spans 216–377; it reads GMKVVIAGRP…LRNNLKQSMG (162 aa). Residue Asn-226 coordinates K(+). Residues 226–231, 245–251, 270–273, 335–338, and 358–360 contribute to the GTP site; these read NAGKSS, TDIAGTT, DTAG, NKAD, and SAR. Ser-230 is a Mg(2+) binding site. The K(+) site is built by Thr-245, Ile-247, and Thr-250. Thr-251 contributes to the Mg(2+) binding site. (6S)-5-formyl-5,6,7,8-tetrahydrofolate is bound at residue Lys-454.

This sequence belongs to the TRAFAC class TrmE-Era-EngA-EngB-Septin-like GTPase superfamily. TrmE GTPase family. In terms of assembly, homodimer. Heterotetramer of two MnmE and two MnmG subunits. Requires K(+) as cofactor.

Its subcellular location is the cytoplasm. Exhibits a very high intrinsic GTPase hydrolysis rate. Involved in the addition of a carboxymethylaminomethyl (cmnm) group at the wobble position (U34) of certain tRNAs, forming tRNA-cmnm(5)s(2)U34. The chain is tRNA modification GTPase MnmE from Salmonella paratyphi A (strain ATCC 9150 / SARB42).